The chain runs to 826 residues: BLOC-2 complex member HPS5 homolog (826 aa).

3 WD repeats span residues 22–61 (KHHNRIKYTCFDISDSYIIFGASSGSLYLFNRNGKFLLLI), 63–102 (NKHGAITSLSISANSKYVAFATQRSLICVYAVNLSAQATP), and 110–149 (DQSVQVTCIHWTQDEKQFYYGDSRGQVSLVLLSSFIGHSL). Polar residues predominate over residues 422 to 446 (ALDTHSSGGSSATTERSLSGGSSSR). The tract at residues 422-447 (ALDTHSSGGSSATTERSLSGGSSSRA) is disordered.

This sequence belongs to the HPS5 family. As to expression, expressed in eye pigment granules.

In terms of biological role, has a role in the biogenesis of eye pigment granules. Eye pigment granules are specialized forms of late endosomes or lysosomes. Biogenesis of pigment granules in the eye requires molecular components required for protein delivery to lysosomes. This chain is BLOC-2 complex member HPS5 homolog, found in Drosophila melanogaster (Fruit fly).